A 464-amino-acid chain; its full sequence is Probable pectin lyase F (464 aa).

The N-terminal stretch at 1–20 (MAIIRSVIAATALLGAAVNA) is a signal peptide. A disulfide bridge connects residues Cys-80 and Cys-103. A glycan (N-linked (GlcNAc...) asparagine) is linked at Asn-126. The active site involves Arg-252. The cysteines at positions 319 and 327 are disulfide-linked. Residues 424–464 (EHEVSTPAVPTPTPVPSSVGSHGSTAGSSHPPAFSRTSFES) are disordered. The segment covering 439–448 (PSSVGSHGST) has biased composition (low complexity).

The protein belongs to the polysaccharide lyase 1 family.

Its subcellular location is the secreted. It carries out the reaction Eliminative cleavage of (1-&gt;4)-alpha-D-galacturonan methyl ester to give oligosaccharides with 4-deoxy-6-O-methyl-alpha-D-galact-4-enuronosyl groups at their non-reducing ends.. Functionally, pectinolytic enzymes consist of four classes of enzymes: pectin lyase, polygalacturonase, pectin methylesterase and rhamnogalacturonase. Among pectinolytic enzymes, pectin lyase is the most important in depolymerization of pectin, since it cleaves internal glycosidic bonds of highly methylated pectins. The protein is Probable pectin lyase F (pelF) of Emericella nidulans (strain FGSC A4 / ATCC 38163 / CBS 112.46 / NRRL 194 / M139) (Aspergillus nidulans).